Consider the following 258-residue polypeptide: Imidazole glycerol phosphate synthase subunit HisF (258 aa).

Residues Asp11 and Asp130 contribute to the active site.

The protein belongs to the HisA/HisF family. In terms of assembly, heterodimer of HisH and HisF.

It localises to the cytoplasm. The enzyme catalyses 5-[(5-phospho-1-deoxy-D-ribulos-1-ylimino)methylamino]-1-(5-phospho-beta-D-ribosyl)imidazole-4-carboxamide + L-glutamine = D-erythro-1-(imidazol-4-yl)glycerol 3-phosphate + 5-amino-1-(5-phospho-beta-D-ribosyl)imidazole-4-carboxamide + L-glutamate + H(+). It participates in amino-acid biosynthesis; L-histidine biosynthesis; L-histidine from 5-phospho-alpha-D-ribose 1-diphosphate: step 5/9. Functionally, IGPS catalyzes the conversion of PRFAR and glutamine to IGP, AICAR and glutamate. The HisF subunit catalyzes the cyclization activity that produces IGP and AICAR from PRFAR using the ammonia provided by the HisH subunit. The sequence is that of Imidazole glycerol phosphate synthase subunit HisF from Stenotrophomonas maltophilia (strain R551-3).